The chain runs to 194 residues: Putative L,D-transpeptidase YciB (194 aa).

The first 19 residues, 1-19, serve as a signal peptide directing secretion; it reads MKLSLFIIAVLMPVILLSA. Cys-20 is lipidated: N-palmitoyl cysteine. The S-diacylglycerol cysteine moiety is linked to residue Cys-20. The region spanning 68 to 194 is the L,D-TPase catalytic domain; the sequence is VWIDVNVKEQ…IPEHTKVVIS (127 aa). His-144 (proton donor/acceptor) is an active-site residue. Cys-170 acts as the Nucleophile in catalysis.

The protein belongs to the YkuD family.

It is found in the cell membrane. It participates in cell wall biogenesis; peptidoglycan biosynthesis. The chain is Putative L,D-transpeptidase YciB (yciB) from Bacillus subtilis (strain 168).